Reading from the N-terminus, the 406-residue chain is MIAVNSRNSLNADMTSLHPETLMVHGGMKGLTEAGVHVPAIDLSTTNPVNDVATGGDSYEWLATGHTLKDGDSAVYQRLWQPGVARFETALAGLEHAEEAVAFATGMAAMTAALLAAVSAGTPHIVAVRPLYGGSDHLLETGLLGTTVTWAKEADIASAIQDDTGLVIVETPANPSLDLVDLDSVVSAAGNVPVLVDNTFCTPVLQQPISHGAALVLHSATKYLGGHGDAMGGIIATNADWAMRLRQVRAITGALLHPMGAYLLHRGLRTLAVRMRAAQTTAGELAERLDAHPAISVVHYPGLKGQDPRGLLGRQMSGGGAMIAMELAGGFDAARSFVEHCNLVVHAVSLGGADTLIQHPASLTHRPVAATAKPGDGLIRLSVGLEHVDDLADDLIAALDASRAAA.

Residues Tyr76–Arg78 and Gly106–Met107 each bind pyridoxal 5'-phosphate. Tyr132 provides a ligand contact to L-homocysteine. Pyridoxal 5'-phosphate is bound at residue Ser219 to Thr221. The residue at position 222 (Lys222) is an N6-(pyridoxal phosphate)lysine. Arg380 contacts L-homocysteine. Position 380 (Arg380) interacts with L-methionine.

This sequence belongs to the trans-sulfuration enzymes family. L-methionine gamma-lyase subfamily. In terms of assembly, homotetramer. The cofactor is pyridoxal 5'-phosphate.

It carries out the reaction L-methionine + H2O = methanethiol + 2-oxobutanoate + NH4(+). The enzyme catalyses L-homocysteine + H2O = 2-oxobutanoate + hydrogen sulfide + NH4(+) + H(+). Its activity is regulated as follows. Is inhibited in vitro by carbonyl reagents, completely inactivated by DL-propargylglycine, and unaffected by metal-chelating agents. Functionally, catalyzes the alpha,gamma-elimination of L-methionine to produce methanethiol, 2-oxobutanoate and ammonia. May be responsible for the production of methanethiol associated with desirable Cheddar-type sulfur notes during cheese ripening. Is also able to catalyze the alpha,gamma-elimination of L-homocysteine and DL-selenomethionine, but has no activity toward L-cysteine, L-cystathionine, S-adenosyl-L-homocysteine and D-methionine. In Brevibacterium aurantiacum, this protein is L-methionine gamma-lyase.